The primary structure comprises 728 residues: Procollagen-lysine,2-oxoglutarate 5-dioxygenase 1 (728 aa).

An N-terminal signal peptide occupies residues Met-1–Ala-18. Asn-177, Asn-198, and Asn-539 each carry an N-linked (GlcNAc...) asparagine glycan. The region spanning Gln-637–Pro-728 is the Fe2OG dioxygenase domain. Residues His-657 and Asp-659 each coordinate Fe cation. N-linked (GlcNAc...) asparagine glycosylation is present at Asn-687. Fe cation is bound at residue His-709. Arg-719 is a catalytic residue.

In terms of assembly, homodimer. Identified in a complex with P3H3 and P3H4. The cofactor is Fe(2+). It depends on L-ascorbate as a cofactor.

The protein resides in the rough endoplasmic reticulum membrane. The enzyme catalyses L-lysyl-[collagen] + 2-oxoglutarate + O2 = (5R)-5-hydroxy-L-lysyl-[collagen] + succinate + CO2. Part of a complex composed of PLOD1, P3H3 and P3H4 that catalyzes hydroxylation of lysine residues in collagen alpha chains and is required for normal assembly and cross-linkling of collagen fibrils. Forms hydroxylysine residues in -Xaa-Lys-Gly- sequences in collagens. These hydroxylysines serve as sites of attachment for carbohydrate units and are essential for the stability of the intermolecular collagen cross-links. The protein is Procollagen-lysine,2-oxoglutarate 5-dioxygenase 1 (Plod1) of Rattus norvegicus (Rat).